The primary structure comprises 637 residues: 1-deoxy-D-xylulose-5-phosphate synthase (637 aa).

Thiamine diphosphate-binding positions include His-82 and 123–125 (GHA). Residue Asp-154 participates in Mg(2+) binding. Thiamine diphosphate-binding positions include 155 to 156 (GS), Asn-183, Tyr-295, and Glu-378. Residue Asn-183 participates in Mg(2+) binding.

This sequence belongs to the transketolase family. DXPS subfamily. Homodimer. The cofactor is Mg(2+). Thiamine diphosphate is required as a cofactor.

It carries out the reaction D-glyceraldehyde 3-phosphate + pyruvate + H(+) = 1-deoxy-D-xylulose 5-phosphate + CO2. It functions in the pathway metabolic intermediate biosynthesis; 1-deoxy-D-xylulose 5-phosphate biosynthesis; 1-deoxy-D-xylulose 5-phosphate from D-glyceraldehyde 3-phosphate and pyruvate: step 1/1. Functionally, catalyzes the acyloin condensation reaction between C atoms 2 and 3 of pyruvate and glyceraldehyde 3-phosphate to yield 1-deoxy-D-xylulose-5-phosphate (DXP). The polypeptide is 1-deoxy-D-xylulose-5-phosphate synthase (Lawsonia intracellularis (strain PHE/MN1-00)).